The sequence spans 759 residues: Catalase-peroxidase (759 aa).

Residues 1 to 24 are disordered; the sequence is MTQDKCPFKEQPSQPNFAGGGTSN. Residues 96 to 242 constitute a cross-link (tryptophyl-tyrosyl-methioninium (Trp-Tyr) (with M-268)); that stretch reads WHSAGTYRVF…LAAAHMGLIY (147 aa). His97 functions as the Proton acceptor in the catalytic mechanism. Residues 242–268 constitute a cross-link (tryptophyl-tyrosyl-methioninium (Tyr-Met) (with W-96)); the sequence is YVNPEGPDGNPDPIAAAHDIRDTFGRM. Heme b is bound at residue His283.

Belongs to the peroxidase family. Peroxidase/catalase subfamily. In terms of assembly, homodimer or homotetramer. It depends on heme b as a cofactor. Post-translationally, formation of the three residue Trp-Tyr-Met cross-link is important for the catalase, but not the peroxidase activity of the enzyme.

It localises to the cytoplasm. The catalysed reaction is H2O2 + AH2 = A + 2 H2O. It catalyses the reaction 2 H2O2 = O2 + 2 H2O. Bifunctional enzyme with both catalase and broad-spectrum peroxidase activity. The protein is Catalase-peroxidase of Neosartorya fischeri (strain ATCC 1020 / DSM 3700 / CBS 544.65 / FGSC A1164 / JCM 1740 / NRRL 181 / WB 181) (Aspergillus fischerianus).